A 385-amino-acid chain; its full sequence is Urotensin-2 receptor (385 aa).

Topologically, residues Met1–Ile53 are extracellular. Asn28 and Asn32 each carry an N-linked (GlcNAc...) asparagine glycan. Residues Gly54–Cys76 traverse the membrane as a helical segment. Topologically, residues Arg77–Tyr86 are cytoplasmic. Residues Val87–Thr112 form a helical membrane-spanning segment. At Lys113 to Arg123 the chain is on the extracellular side. Cysteines 122 and 198 form a disulfide. Residues Val124–Ser145 traverse the membrane as a helical segment. Residues Glu146–Lys166 lie on the Cytoplasmic side of the membrane. The helical transmembrane segment at Leu167 to Leu185 threads the bilayer. The Extracellular portion of the chain corresponds to Ala186–Arg208. The helical transmembrane segment at Thr209 to Ile231 threads the bilayer. At Arg232–Leu257 the chain is on the cytoplasmic side. A helical membrane pass occupies residues Tyr258–Tyr283. Topologically, residues His284 to Asn298 are extracellular. Residues Tyr299–Thr320 form a helical membrane-spanning segment. The Cytoplasmic portion of the chain corresponds to Lys321–Val385.

Belongs to the G-protein coupled receptor 1 family.

The protein resides in the cell membrane. Functionally, high affinity receptor for urotensin-2 and urotensin-2B. The activity of this receptor is mediated by a G-protein that activate a phosphatidylinositol-calcium second messenger system. The chain is Urotensin-2 receptor (Uts2r) from Mus musculus (Mouse).